The sequence spans 445 residues: Interferon-activable protein 202 (445 aa).

Residues 1 to 27 show a composition bias toward polar residues; it reads MSNRNLRSSTNSEFSEGQHQTPSSDSS. A disordered region spans residues 1-57; sequence MSNRNLRSSTNSEFSEGQHQTPSSDSSGHGEDQPQASPGPNKKSHTPKKNISKGAVL. Residues 42–51 show a composition bias toward basic residues; sequence KKSHTPKKNI. HIN-200 domains lie at 46-243 and 244-441; these read TPKK…IKGE and KLLK…MEVI. Required for homomultimerization stretches follow at residues 82-89 and 281-288; these read MFHATVAT.

Belongs to the HIN-200 family. In terms of assembly, homomultimer; homotetramerizes (via HIN-200 domain 2), enhancing affinity for double-stranded DNA (dsDNA). Interacts (via HIN-200 domain 2) with AIM2 (via HIN-200 domain); preventing activation of the AIM2 inflammasome. Binds to several transcription factors, including NF-kappa-B p50 (NFKB1) and p65 (RELA), FOS, JUN, E2F1, E2F4, MYOD1 and myogenin. Also binds TP53/p53, the hypophosphorylated, growth-inhibitory form of the retinoblastoma protein and the p53-binding protein 1 (TP53BP1). In terms of processing, phosphorylated.

The protein resides in the cytoplasm. The protein localises to the nucleus. Its function is as follows. DNA-binding protein involved in innate immune response and has anti-inflammatory activity. Inhibits caspase activation in response to cytosolic DNA by preventing activation of the AIM2 inflammasome, probably by sequestering cytoplasmic DNA and preventing its being bound by AIM2. Also inhibits activation of the AIM2 inflammasome via a direct interaction with AIM2, which prevents the interaction between AIM2 and PYCARD and formation of the AIM2 inflammasome. Binds double-stranded DNA (dsDNA) in the cytosol. Has anti-apoptotic effects due to inhibition of the transcriptional activity of TP53/p53. Inhibits the transcriptional activity of several transcription factors, including NF-kappa-B p50 and p65, FOS, JUN, E2F1, E2F4, MYOD1 and myogenin. The polypeptide is Interferon-activable protein 202 (Mus musculus (Mouse)).